We begin with the raw amino-acid sequence, 118 residues long: Large ribosomal subunit protein bL20 (118 aa).

The protein belongs to the bacterial ribosomal protein bL20 family.

Binds directly to 23S ribosomal RNA and is necessary for the in vitro assembly process of the 50S ribosomal subunit. It is not involved in the protein synthesizing functions of that subunit. This is Large ribosomal subunit protein bL20 from Acidiphilium cryptum (strain JF-5).